Consider the following 341-residue polypeptide: Geranylgeranyl pyrophosphate synthase penG (341 aa).

K68, R71, and H100 together coordinate isopentenyl diphosphate. Residues D107 and D111 each contribute to the Mg(2+) site. R116 is a binding site for dimethylallyl diphosphate. Residue R117 participates in isopentenyl diphosphate binding. Dimethylallyl diphosphate contacts are provided by K194, T195, and Q228. D231 is a Mg(2+) binding site. Residues N235, K245, and K255 each coordinate dimethylallyl diphosphate.

Belongs to the FPP/GGPP synthase family. Requires Mg(2+) as cofactor.

It carries out the reaction isopentenyl diphosphate + dimethylallyl diphosphate = (2E)-geranyl diphosphate + diphosphate. The catalysed reaction is isopentenyl diphosphate + (2E)-geranyl diphosphate = (2E,6E)-farnesyl diphosphate + diphosphate. It catalyses the reaction isopentenyl diphosphate + (2E,6E)-farnesyl diphosphate = (2E,6E,10E)-geranylgeranyl diphosphate + diphosphate. It functions in the pathway secondary metabolite biosynthesis. Functionally, geranylgeranyl pyrophosphate synthase; part of the gene cluster that mediates the biosynthesis of the indole diterpenes penitrems. The geranylgeranyl diphosphate (GGPP) synthase penG catalyzes the first step in penitrem biosynthesis via conversion of farnesyl pyrophosphate and isopentyl pyrophosphate into geranylgeranyl pyrophosphate (GGPP). Condensation of indole-3-glycerol phosphate with GGPP by the prenyl transferase penC then forms 3-geranylgeranylindole (3-GGI). Epoxidation by the FAD-dependent monooxygenase penM leads to a epoxidized-GGI that is substrate of the terpene cyclase penB for cyclization to yield paspaline. Paspaline is subsequently converted to 13-desoxypaxilline by the cytochrome P450 monooxygenase penP, the latter being then converted to paxilline by the cytochrome P450 monooxygenase penQ. Paxilline is converted to beta-paxitriol via C-10 ketoreduction by the short-chain dehydrogenase PC-15 which can be monoprenylated at the C-20 by the indole diterpene prenyltransferase penD. A two-step elimination (acetylation and elimination) process performed by the O-acetyltransferase PC-16 and the P.simplicissimum ptmI-ortholog not yet identified in P.crustosum, leads to the production of the prenylated form of penijanthine. The FAD-linked oxidoreductase ptmO then converts the prenylated form of penijanthine into PC-M5 which is in turn transformed into PC-M4 by the aromatic dimethylallyltransferase PC-22. A series of oxidation steps involving 4 cytochrome P450 monooxygenases (PC-21, PC-05, PC-23, PC-20) and a FAD-dependent monooxygenase (PC-14) are required for the transformation of PC-M4 to penitrems A and E. Synthesis of these final products is proposed to proceed via penitrems D and C (PC-21, PC-05, PC-14) and penitrems B and F (PC-21, PC-05, PC-14, PC-23). The chain is Geranylgeranyl pyrophosphate synthase penG from Penicillium crustosum (Blue mold fungus).